The chain runs to 192 residues: Ras-like GTP-binding protein rhoA (192 aa).

12–19 (GDGACGKT) serves as a coordination point for GTP. The Effector region signature appears at 34-42 (YVPTVFENY). GTP is bound by residues 59 to 63 (DTAGQ) and 117 to 120 (NKRD). Cys-189 bears the Cysteine methyl ester mark. The S-geranylgeranyl cysteine moiety is linked to residue Cys-189. Residues 190–192 (MIL) constitute a propeptide, removed in mature form.

It belongs to the small GTPase superfamily. Rho family. In terms of assembly, may interact with unc-89 (via DN and PH domains). Interacts with bli-3 and memo-1. In larvae and adults, enriched at the tip of the head where the anterior sensory organ is located and in the pharyngeal nerve ring (at protein level). In embryos, enriched at the boundaries of dorsal cells undergoing intercalation, ventral enclosure and elongation.

It is found in the cell membrane. The protein localises to the cytoplasm. The protein resides in the cytoskeleton. It localises to the cell cortex. With respect to regulation, GTP hydrolysis is stimulated by unc-89. Its function is as follows. Required for ventral migration of epidermal cells during ventral enclosure in the embryo and for cell elongation. Also required for ventral migration of P cells during larval development. Involved in asymmetric spindle positioning during anaphase and establishment of cell polarity during embryo development. In adults, involved in regulation of multiple processes including locomotion, pharyngeal pumping, fecundity, ovulation, defecation and body morphology. In body wall muscles, regulates organization of myosin thick filaments downstream of unc-89. Association with the oxidase bli-3 promotes ROS production and this interaction may be modulated by memo-1, in order to control the oxidative stress response and longevity. This is Ras-like GTP-binding protein rhoA from Caenorhabditis elegans.